The primary structure comprises 313 residues: uncharacterized protein (313 aa).

This is an uncharacterized protein from Orgyia pseudotsugata multicapsid polyhedrosis virus (OpMNPV).